A 377-amino-acid polypeptide reads, in one-letter code: O-phospho-L-seryl-tRNA:Cys-tRNA synthase (377 aa).

Pyridoxal 5'-phosphate-binding positions include 83–84, Asn-188, and 211–213; these read AR and SGH. Lys-214 is modified (N6-(pyridoxal phosphate)lysine).

Belongs to the SepCysS family. Homodimer. Interacts with SepRS. It depends on pyridoxal 5'-phosphate as a cofactor.

It carries out the reaction O-phospho-L-seryl-tRNA(Cys) + hydrogen sulfide + H(+) = L-cysteinyl-tRNA(Cys) + phosphate. Converts O-phospho-L-seryl-tRNA(Cys) (Sep-tRNA(Cys)) to L-cysteinyl-tRNA(Cys) (Cys-tRNA(Cys)). The chain is O-phospho-L-seryl-tRNA:Cys-tRNA synthase from Methanothermobacter thermautotrophicus (strain ATCC 29096 / DSM 1053 / JCM 10044 / NBRC 100330 / Delta H) (Methanobacterium thermoautotrophicum).